Reading from the N-terminus, the 314-residue chain is R2-like ligand binding oxidase (314 aa).

Mn(2+) is bound by residues Glu-68, Glu-101, and His-104. The 3-(O4'-tyrosyl)-valine (Val-Tyr) cross-link spans 71–162; sequence VTEDIQPFMS…AAQVRASVTY (92 aa). Glu-101 is a Fe cation binding site. Fe cation-binding residues include Glu-167, Glu-202, and His-205.

Belongs to the ribonucleoside diphosphate reductase small chain family. R2-like ligand binding oxidase subfamily. As to quaternary structure, homodimer. Requires Fe cation as cofactor. Mn(2+) is required as a cofactor.

Probable oxidase that might be involved in lipid metabolism. The chain is R2-like ligand binding oxidase from Mycobacterium bovis (strain ATCC BAA-935 / AF2122/97).